Reading from the N-terminus, the 314-residue chain is Malate dehydrogenase (314 aa).

NAD(+) is bound by residues 11–16 and aspartate 35; that span reads GSGNIG. Substrate contacts are provided by arginine 84 and arginine 90. NAD(+) contacts are provided by residues asparagine 97 and 120–122; that span reads ITN. Substrate contacts are provided by asparagine 122 and arginine 153. Histidine 177 functions as the Proton acceptor in the catalytic mechanism.

This sequence belongs to the LDH/MDH superfamily. MDH type 3 family.

The enzyme catalyses (S)-malate + NAD(+) = oxaloacetate + NADH + H(+). In terms of biological role, catalyzes the reversible oxidation of malate to oxaloacetate. The polypeptide is Malate dehydrogenase (Rickettsia conorii (strain ATCC VR-613 / Malish 7)).